The primary structure comprises 293 residues: Zinc finger protein 80 (293 aa).

2 C2H2-type zinc fingers span residues 69 to 91 and 97 to 119; these read YKCK…HQIH and YECQ…MRIH. Residues 125-147 form a C2H2-type 3; atypical zinc finger; the sequence is CKCVECGKVFNRRSHLLCYHQIH. 4 C2H2-type zinc fingers span residues 153 to 175, 181 to 203, 209 to 231, and 237 to 259; these read YECS…RMTH, FGCK…MKIH, YKCG…SMTH, and YECK…TRSH.

Belongs to the krueppel C2H2-type zinc-finger protein family.

Its subcellular location is the nucleus. Functionally, may be involved in transcriptional regulation. The protein is Zinc finger protein 80 (ZNF80) of Macaca mulatta (Rhesus macaque).